We begin with the raw amino-acid sequence, 131 residues long: Small ribosomal subunit protein uS19 (131 aa).

It belongs to the universal ribosomal protein uS19 family.

Functionally, protein S19 forms a complex with S13 that binds strongly to the 16S ribosomal RNA. The chain is Small ribosomal subunit protein uS19 from Cenarchaeum symbiosum (strain A).